We begin with the raw amino-acid sequence, 504 residues long: Beta-xylosidase (504 aa).

Residue Glu-160 is the Proton donor of the active site. The Nucleophile role is filled by Glu-280.

This sequence belongs to the glycosyl hydrolase 39 family.

It catalyses the reaction Hydrolysis of (1-&gt;4)-beta-D-xylans, to remove successive D-xylose residues from the non-reducing termini.. In Geobacillus stearothermophilus (Bacillus stearothermophilus), this protein is Beta-xylosidase (xynB).